Consider the following 383-residue polypeptide: Homoserine O-succinyltransferase (383 aa).

The AB hydrolase-1 domain occupies 51–361 (NALLICHALS…ESDFGHDAFL (311 aa)). Serine 157 acts as the Nucleophile in catalysis. Arginine 227 lines the substrate pocket. Residues aspartate 324 and histidine 357 contribute to the active site. A substrate-binding site is contributed by aspartate 358.

It belongs to the AB hydrolase superfamily. MetX family. In terms of assembly, homodimer.

The protein localises to the cytoplasm. It catalyses the reaction L-homoserine + succinyl-CoA = O-succinyl-L-homoserine + CoA. Its pathway is amino-acid biosynthesis; L-methionine biosynthesis via de novo pathway; O-succinyl-L-homoserine from L-homoserine: step 1/1. Its function is as follows. Transfers a succinyl group from succinyl-CoA to L-homoserine, forming succinyl-L-homoserine. This chain is Homoserine O-succinyltransferase, found in Teredinibacter turnerae (strain ATCC 39867 / T7901).